We begin with the raw amino-acid sequence, 338 residues long: Glycerol-3-phosphate dehydrogenase [NAD(P)+] (338 aa).

Residues S14, Y15, H35, and K109 each contribute to the NADPH site. Sn-glycerol 3-phosphate is bound by residues K109, G138, and T140. Residue A142 participates in NADPH binding. Residues K194, D247, S257, R258, and N259 each contribute to the sn-glycerol 3-phosphate site. The active-site Proton acceptor is K194. R258 contributes to the NADPH binding site. NADPH is bound by residues V282 and E284.

The protein belongs to the NAD-dependent glycerol-3-phosphate dehydrogenase family.

It is found in the cytoplasm. It catalyses the reaction sn-glycerol 3-phosphate + NAD(+) = dihydroxyacetone phosphate + NADH + H(+). The enzyme catalyses sn-glycerol 3-phosphate + NADP(+) = dihydroxyacetone phosphate + NADPH + H(+). Its pathway is membrane lipid metabolism; glycerophospholipid metabolism. Functionally, catalyzes the reduction of the glycolytic intermediate dihydroxyacetone phosphate (DHAP) to sn-glycerol 3-phosphate (G3P), the key precursor for phospholipid synthesis. The chain is Glycerol-3-phosphate dehydrogenase [NAD(P)+] from Sodalis glossinidius (strain morsitans).